The sequence spans 231 residues: Allergen Ani s 10 (231 aa).

An N-terminal signal peptide occupies residues Met1–Ser19. Tandem repeats lie at residues Gly28–Ile56, Gly57–Ile85, Gly86–Ile114, Glu115–Ile143, Glu144–Ile172, Gly173–Ile201, and Gly204–Ala231. Residues Gly28–Ile201 form a 6 X 29 AA tandem repeats of [EG]-G-P-G-P-V-[IV]-[SG]-G-S-G-I-G-[ND]-V-W-[NE]-K-A-N-E-[QP]-A-[AE]-[QEH]-Q-[EQ]-[NS]-I region. 2 disordered regions span residues Gln107–Ile126 and Asn134–Ala231. 3 stretches are compositionally biased toward low complexity: residues Ile114–Gly123, Ile143–Gly152, and Pro177–Val187.

The chain is Allergen Ani s 10 from Anisakis simplex (Herring worm).